The chain runs to 201 residues: GTP-binding protein ryh1 (201 aa).

18–25 (GEQSVGKT) provides a ligand contact to GTP. Residues 40–48 (YQATIGIDF) carry the Effector region motif. GTP-binding positions include 66 to 70 (DTAGQ) and 124 to 127 (NKTD). Residues cysteine 199 and cysteine 201 are each lipidated (S-geranylgeranyl cysteine). Position 201 is a cysteine methyl ester (cysteine 201).

The protein belongs to the small GTPase superfamily. Rab family.

The protein resides in the endosome membrane. Its subcellular location is the golgi apparatus membrane. It is found in the nucleus. It localises to the cytoplasm. The protein localises to the cytosol. Has a role in retrograde traffricking of proteins from the endosome to the Golgi. Involved in protein transport to the plasma membrane. Involved in the secretory pathway where it has a role in acid phosphatase secretion. Required also in normal glycosylation trafficking pathways. The protein is GTP-binding protein ryh1 (ryh1) of Schizosaccharomyces pombe (strain 972 / ATCC 24843) (Fission yeast).